Reading from the N-terminus, the 532-residue chain is Nucleobase-ascorbate transporter 6 (532 aa).

The disordered stretch occupies residues 1–24; sequence MAGGGAPAPKADEPQPHPPKDQLP. Basic and acidic residues predominate over residues 10-20; the sequence is KADEPQPHPPK. 12 helical membrane passes run 39–59, 75–95, 97–117, 137–157, 163–185, 192–212, 223–243, 289–309, 361–381, 392–414, 426–446, and 463–483; these read AILL…LIPT, VIQT…LFGT, LPAV…IILS, TQGA…SGLW, FLSP…EFGF, IEIG…LPHV, FAVI…TVGG, FAMM…FVAV, VGSR…SILG, APII…LSFL, FILG…NEYT, and DMVN…AFFL.

This sequence belongs to the nucleobase:cation symporter-2 (NCS2) (TC 2.A.40) family. As to expression, expressed in the apical region of cotyledons 4 days after imbibition (DAI). Expressed in the whole vasculature at 12 DAI. Expressed in the root central cylinder and lateral root primordia. Expressed in the vasculature of sepals, filaments, carpels and developing siliques.

Its subcellular location is the membrane. The polypeptide is Nucleobase-ascorbate transporter 6 (NAT6) (Arabidopsis thaliana (Mouse-ear cress)).